Consider the following 436-residue polypeptide: Tol-Pal system protein TolB (436 aa).

An N-terminal signal peptide occupies residues 1-28 (MEMLRRNFFRLLMVLVAGCGLIASPAKA).

It belongs to the TolB family. As to quaternary structure, the Tol-Pal system is composed of five core proteins: the inner membrane proteins TolA, TolQ and TolR, the periplasmic protein TolB and the outer membrane protein Pal. They form a network linking the inner and outer membranes and the peptidoglycan layer.

It is found in the periplasm. Part of the Tol-Pal system, which plays a role in outer membrane invagination during cell division and is important for maintaining outer membrane integrity. In Sinorhizobium medicae (strain WSM419) (Ensifer medicae), this protein is Tol-Pal system protein TolB.